The primary structure comprises 31 residues: Photosystem II reaction center protein T (31 aa).

Residues 3-23 (AFTYTLLMTLGVVTLFFAVAF) traverse the membrane as a helical segment.

The protein belongs to the PsbT family. PSII is composed of 1 copy each of membrane proteins PsbA, PsbB, PsbC, PsbD, PsbE, PsbF, PsbH, PsbI, PsbJ, PsbK, PsbL, PsbM, PsbT, PsbX, PsbY, Psb30/Ycf12, peripheral proteins PsbO, CyanoQ (PsbQ), PsbU, PsbV and a large number of cofactors. It forms dimeric complexes.

The protein resides in the cellular thylakoid membrane. Its function is as follows. Found at the monomer-monomer interface of the photosystem II (PS II) dimer, plays a role in assembly and dimerization of PSII. PSII is a light-driven water plastoquinone oxidoreductase, using light energy to abstract electrons from H(2)O, generating a proton gradient subsequently used for ATP formation. The protein is Photosystem II reaction center protein T of Prochlorococcus marinus (strain SARG / CCMP1375 / SS120).